The chain runs to 263 residues: Ribonuclease 3 (263 aa).

The tract at residues 1–23 (MPHSKNQRKHRHHSHSERRRQPK) is disordered. The 130-residue stretch at 35-164 (FDELLRTLNL…FVGALYLDQG (130 aa)) folds into the RNase III domain. Glutamate 77 serves as a coordination point for Mg(2+). The active site involves aspartate 81. The Mg(2+) site is built by aspartate 150 and glutamate 153. The active site involves glutamate 153. The region spanning 190 to 259 (DFKSQLQEFI…AQQALITLSQ (70 aa)) is the DRBM domain.

Belongs to the ribonuclease III family. In terms of assembly, homodimer. The cofactor is Mg(2+).

It is found in the cytoplasm. It carries out the reaction Endonucleolytic cleavage to 5'-phosphomonoester.. Its function is as follows. Digests double-stranded RNA. Involved in the processing of primary rRNA transcript to yield the immediate precursors to the large and small rRNAs (23S and 16S). Processes some mRNAs, and tRNAs when they are encoded in the rRNA operon. Processes pre-crRNA and tracrRNA of type II CRISPR loci if present in the organism. In Halalkalibacterium halodurans (strain ATCC BAA-125 / DSM 18197 / FERM 7344 / JCM 9153 / C-125) (Bacillus halodurans), this protein is Ribonuclease 3.